The primary structure comprises 260 residues: Pyridoxine 5'-phosphate synthase (260 aa).

Asparagine 15 is a binding site for 3-amino-2-oxopropyl phosphate. Residue 17–18 (DH) participates in 1-deoxy-D-xylulose 5-phosphate binding. Arginine 26 is a 3-amino-2-oxopropyl phosphate binding site. Histidine 51 acts as the Proton acceptor in catalysis. Residues arginine 53 and histidine 58 each coordinate 1-deoxy-D-xylulose 5-phosphate. The Proton acceptor role is filled by glutamate 78. Threonine 108 is a binding site for 1-deoxy-D-xylulose 5-phosphate. Histidine 199 acts as the Proton donor in catalysis. Residues glycine 200 and 221–222 (GH) each bind 3-amino-2-oxopropyl phosphate.

It belongs to the PNP synthase family. Homooctamer; tetramer of dimers.

It is found in the cytoplasm. It catalyses the reaction 3-amino-2-oxopropyl phosphate + 1-deoxy-D-xylulose 5-phosphate = pyridoxine 5'-phosphate + phosphate + 2 H2O + H(+). The protein operates within cofactor biosynthesis; pyridoxine 5'-phosphate biosynthesis; pyridoxine 5'-phosphate from D-erythrose 4-phosphate: step 5/5. Functionally, catalyzes the complicated ring closure reaction between the two acyclic compounds 1-deoxy-D-xylulose-5-phosphate (DXP) and 3-amino-2-oxopropyl phosphate (1-amino-acetone-3-phosphate or AAP) to form pyridoxine 5'-phosphate (PNP) and inorganic phosphate. The sequence is that of Pyridoxine 5'-phosphate synthase from Cupriavidus taiwanensis (strain DSM 17343 / BCRC 17206 / CCUG 44338 / CIP 107171 / LMG 19424 / R1) (Ralstonia taiwanensis (strain LMG 19424)).